The following is a 573-amino-acid chain: Leucine aminopeptidase, chloroplastic (573 aa).

The N-terminal 53 residues, 1-53 (MATLRVSSLLASSPSSLHCNPSVFTKCQSSPRWAFSFSVTPLCSRRSKRIVHC), are a transit peptide targeting the chloroplast. Mn(2+) contacts are provided by Lys342 and Asp347. Residue Lys354 is part of the active site. The Mn(2+) site is built by Asp367, Asp427, and Glu429. The active site involves Arg431.

Belongs to the peptidase M17 family. As to quaternary structure, homohexamer (dimer of homotrimers). Mn(2+) is required as a cofactor. As to expression, in tubers and floral buds of untreated plants. After abscisic acid (ABA) treatment or mechanical wounding is mostly accumulated in leaves, to a lesser extent in stems, but not in roots.

The protein resides in the plastid. Its subcellular location is the chloroplast. It catalyses the reaction Release of an N-terminal amino acid, Xaa-|-Yaa-, in which Xaa is preferably Leu, but may be other amino acids including Pro although not Arg or Lys, and Yaa may be Pro. Amino acid amides and methyl esters are also readily hydrolyzed, but rates on arylamides are exceedingly low.. The catalysed reaction is Release of N-terminal proline from a peptide.. Presumably involved in the processing and regular turnover of intracellular proteins. In Solanum tuberosum (Potato), this protein is Leucine aminopeptidase, chloroplastic (LAP).